The chain runs to 120 residues: Ribosome-binding factor A (120 aa).

Belongs to the RbfA family. As to quaternary structure, monomer. Binds 30S ribosomal subunits, but not 50S ribosomal subunits or 70S ribosomes.

It is found in the cytoplasm. Its function is as follows. One of several proteins that assist in the late maturation steps of the functional core of the 30S ribosomal subunit. Associates with free 30S ribosomal subunits (but not with 30S subunits that are part of 70S ribosomes or polysomes). Required for efficient processing of 16S rRNA. May interact with the 5'-terminal helix region of 16S rRNA. The polypeptide is Ribosome-binding factor A (Desulforamulus reducens (strain ATCC BAA-1160 / DSM 100696 / MI-1) (Desulfotomaculum reducens)).